The sequence spans 361 residues: Protein-glutamate methylesterase/protein-glutamine glutaminase 1 (361 aa).

One can recognise a Response regulatory domain in the interval 10 to 127 (KVLVVDDSAL…REGIEEKAQE (118 aa)). Aspartate 61 carries the 4-aspartylphosphate modification. In terms of domain architecture, CheB-type methylesterase spans 167–359 (FATTDKLIAV…ASVKRWYAEN (193 aa)). Residues serine 179, histidine 205, and aspartate 301 contribute to the active site.

Belongs to the CheB family. Post-translationally, phosphorylated by CheA. Phosphorylation of the N-terminal regulatory domain activates the methylesterase activity.

The protein resides in the cytoplasm. The enzyme catalyses [protein]-L-glutamate 5-O-methyl ester + H2O = L-glutamyl-[protein] + methanol + H(+). It catalyses the reaction L-glutaminyl-[protein] + H2O = L-glutamyl-[protein] + NH4(+). In terms of biological role, involved in chemotaxis. Part of a chemotaxis signal transduction system that modulates chemotaxis in response to various stimuli. Catalyzes the demethylation of specific methylglutamate residues introduced into the chemoreceptors (methyl-accepting chemotaxis proteins or MCP) by CheR. Also mediates the irreversible deamidation of specific glutamine residues to glutamic acid. In Hahella chejuensis (strain KCTC 2396), this protein is Protein-glutamate methylesterase/protein-glutamine glutaminase 1.